Consider the following 256-residue polypeptide: 3-deoxy-manno-octulosonate cytidylyltransferase (256 aa).

Belongs to the KdsB family.

The protein resides in the cytoplasm. It catalyses the reaction 3-deoxy-alpha-D-manno-oct-2-ulosonate + CTP = CMP-3-deoxy-beta-D-manno-octulosonate + diphosphate. It participates in nucleotide-sugar biosynthesis; CMP-3-deoxy-D-manno-octulosonate biosynthesis; CMP-3-deoxy-D-manno-octulosonate from 3-deoxy-D-manno-octulosonate and CTP: step 1/1. It functions in the pathway bacterial outer membrane biogenesis; lipopolysaccharide biosynthesis. Functionally, activates KDO (a required 8-carbon sugar) for incorporation into bacterial lipopolysaccharide in Gram-negative bacteria. This Histophilus somni (strain 2336) (Haemophilus somnus) protein is 3-deoxy-manno-octulosonate cytidylyltransferase.